The sequence spans 306 residues: D-alanine--D-alanine ligase (306 aa).

The region spanning 104 to 303 is the ATP-grasp domain; that stretch reads KMLWKAFGLP…FEQLVVKILE (200 aa). 134 to 189 contributes to the ATP binding site; that stretch reads VAKLGLPLMVKPSLEGSSVGLTKVKAVEELKSAVEYALKFDNTILIEEWLAGDELT. 3 residues coordinate Mg(2+): D257, E270, and N272.

It belongs to the D-alanine--D-alanine ligase family. Mg(2+) serves as cofactor. The cofactor is Mn(2+).

The protein resides in the cytoplasm. The enzyme catalyses 2 D-alanine + ATP = D-alanyl-D-alanine + ADP + phosphate + H(+). The protein operates within cell wall biogenesis; peptidoglycan biosynthesis. Functionally, cell wall formation. The polypeptide is D-alanine--D-alanine ligase (Haemophilus influenzae (strain PittGG)).